The sequence spans 501 residues: Dipeptide and tripeptide permease A (501 aa).

Residues 1-21 (MSTANNKPAESVSLNAFKQPR) are Cytoplasmic-facing. A helical transmembrane segment spans residues 22 to 44 (AFYLIFSIELWERFGYYGLQGIM). Residues 45-59 (AVYLVKQLGMSEADS) are Periplasmic-facing. A helical transmembrane segment spans residues 60–80 (ITLFSSFSALVYGLVAIGGWL). Residues 81-89 (GDKVLGTKR) lie on the Cytoplasmic side of the membrane. Residues 90–110 (VIMLGAIVLAIGYALVAWSGH) traverse the membrane as a helical segment. Position 111 (Asp-111) is a topological domain, periplasmic. Residues 112–132 (AAIVYMGMATIAVGNGLFKAN) form a helical membrane-spanning segment. At 133–153 (PSSLLSTCYDKNDPRLDGAFT) the chain is on the cytoplasmic side. The helical transmembrane segment at 154–174 (MYYMSINIGSFFSMLATPWLA) threads the bilayer. Residues 175-178 (ARFG) lie on the Periplasmic side of the membrane. The chain crosses the membrane as a helical span at residues 179–199 (WSVAFALSVVGMVITIINFAF). The Cytoplasmic segment spans residues 200 to 218 (CQKWVKQYGSKPDFAPVHM). Residues 219–239 (GKLLATIAGVVVLVAIATWLL) traverse the membrane as a helical segment. At 240-246 (HNQGIAR) the chain is on the periplasmic side. The chain crosses the membrane as a helical span at residues 247 to 267 (MVLGVVALGIVVIFAKETIGL). Over 268 to 274 (KGAARRK) the chain is Cytoplasmic. A helical membrane pass occupies residues 275–295 (MIVAFLLMVEAIVFFVLYSQM). Residues 296-320 (PTSLNFFAIRNVEHSILGIAFEPEQ) are Periplasmic-facing. Residues 321–341 (YQALNPFWIMIGSPILAAIYN) traverse the membrane as a helical segment. Residues 342–352 (KMGDRLPMPHK) are Cytoplasmic-facing. The helical transmembrane segment at 353-373 (FAIGMVLCSGAFLVLPLGAKF) threads the bilayer. The Periplasmic segment spans residues 374–383 (ASDAGIVSVN). Residues 384-404 (WLILSYALQSIGELMISGLGL) traverse the membrane as a helical segment. Over 405-414 (AMVAQLVPQR) the chain is Cytoplasmic. The chain crosses the membrane as a helical span at residues 415 to 435 (LMGFIMGSWFLTTAGAAIIAG). At 436–459 (KIANLMAVPENVTDPLVSLEVYGH) the chain is on the periplasmic side. The chain crosses the membrane as a helical span at residues 460–480 (VFLQIGIVTAVIAALMLLTAP). Residues 481–501 (KLNRMTQDDSADLKARETAAA) lie on the Cytoplasmic side of the membrane.

This sequence belongs to the major facilitator superfamily. Proton-dependent oligopeptide transporter (POT/PTR) (TC 2.A.17) family. DtpA subfamily.

It is found in the cell inner membrane. Functionally, proton-dependent permease that transports di- and tripeptides. The chain is Dipeptide and tripeptide permease A from Klebsiella pneumoniae (strain 342).